The sequence spans 225 residues: Phosphoserine phosphatase (225 aa).

N-acetylmethionine is present on M1. D20 acts as the Nucleophile in catalysis. D20 and D22 together coordinate Mg(2+). 20–22 (DVD) serves as a coordination point for L-serine. Catalysis depends on D22, which acts as the Proton donor. Residue M52 coordinates O-phospho-L-serine. G53 is a binding site for phosphate. L-serine contacts are provided by residues 109-111 (SGG) and K158. Residues 109-111 (SGG) and K158 contribute to the O-phospho-L-serine site. D179 contributes to the Mg(2+) binding site. T182 is an O-phospho-L-serine binding site. T182 provides a ligand contact to phosphate.

This sequence belongs to the HAD-like hydrolase superfamily. SerB family. Homodimer. Mg(2+) serves as cofactor.

The protein resides in the cytoplasm. It is found in the cytosol. It carries out the reaction O-phospho-L-serine + H2O = L-serine + phosphate. The catalysed reaction is O-phospho-D-serine + H2O = D-serine + phosphate. The protein operates within amino-acid biosynthesis; L-serine biosynthesis; L-serine from 3-phospho-D-glycerate: step 3/3. Catalyzes the last irreversible step in the biosynthesis of L-serine from carbohydrates, the dephosphorylation of O-phospho-L-serine to L-serine. L-serine can then be used in protein synthesis, to produce other amino acids, in nucleotide metabolism or in glutathione synthesis, or can be racemized to D-serine, a neuromodulator. May also act on O-phospho-D-serine. This is Phosphoserine phosphatase from Mus musculus (Mouse).